A 376-amino-acid chain; its full sequence is N-acetyldiaminopimelate deacetylase (376 aa).

Residue D69 is part of the active site. E128 serves as the catalytic Proton acceptor.

Belongs to the peptidase M20A family. N-acetyldiaminopimelate deacetylase subfamily.

It carries out the reaction N-acetyl-(2S,6S)-2,6-diaminopimelate + H2O = (2S,6S)-2,6-diaminopimelate + acetate. It functions in the pathway amino-acid biosynthesis; L-lysine biosynthesis via DAP pathway; LL-2,6-diaminopimelate from (S)-tetrahydrodipicolinate (acetylase route): step 3/3. Its function is as follows. Catalyzes the conversion of N-acetyl-diaminopimelate to diaminopimelate and acetate. The protein is N-acetyldiaminopimelate deacetylase of Streptococcus pneumoniae (strain P1031).